The chain runs to 606 residues: Chaperone protein DnaK (606 aa).

At threonine 174 the chain carries Phosphothreonine; by autocatalysis. Residues 579–593 are compositionally biased toward polar residues; sequence ASAAGNPGQGQTNEN. Residues 579 to 606 are disordered; the sequence is ASAAGNPGQGQTNENPGGKTIDGDYKVN.

This sequence belongs to the heat shock protein 70 family.

In terms of biological role, acts as a chaperone. This chain is Chaperone protein DnaK, found in Dictyoglomus thermophilum (strain ATCC 35947 / DSM 3960 / H-6-12).